The chain runs to 577 residues: 2-succinyl-5-enolpyruvyl-6-hydroxy-3-cyclohexene-1-carboxylate synthase (577 aa).

This sequence belongs to the TPP enzyme family. MenD subfamily. As to quaternary structure, homodimer. The cofactor is Mg(2+). Requires Mn(2+) as cofactor. Thiamine diphosphate is required as a cofactor.

The enzyme catalyses isochorismate + 2-oxoglutarate + H(+) = 5-enolpyruvoyl-6-hydroxy-2-succinyl-cyclohex-3-ene-1-carboxylate + CO2. Its pathway is quinol/quinone metabolism; 1,4-dihydroxy-2-naphthoate biosynthesis; 1,4-dihydroxy-2-naphthoate from chorismate: step 2/7. It functions in the pathway quinol/quinone metabolism; menaquinone biosynthesis. Functionally, catalyzes the thiamine diphosphate-dependent decarboxylation of 2-oxoglutarate and the subsequent addition of the resulting succinic semialdehyde-thiamine pyrophosphate anion to isochorismate to yield 2-succinyl-5-enolpyruvyl-6-hydroxy-3-cyclohexene-1-carboxylate (SEPHCHC). The sequence is that of 2-succinyl-5-enolpyruvyl-6-hydroxy-3-cyclohexene-1-carboxylate synthase from Enterococcus faecalis (strain ATCC 700802 / V583).